The primary structure comprises 380 residues: MEWTEERAAALREARCVVVKVGSAVLTTETGVNLAVIDSLAAQLSALQESGKRVVLVSSGAVAAGRSALRDCCEIAGMPHKQAASAVGQSRLMHHYDEAFARYGHLSAQVLLTRDDLRNRERFLNARNTFQALLDWGVIPVVNENDTVAVQELKFGDNDCLASLLLNVVEGDLYVNLTSASGVYADNPQTNPEAGILPCIEDVHTLDLDVMCGGKTSVGTGGMYSKLLAASRAAQLGVPTLILPGREPRILERAFSGEPVGTWVRPEARVVSRRKYWLAYQSEPSGTVTVDEGAARALLQQGGSLLPGGVCDVSGAFEPGALVRIAGPDGTVIAVGLSNYGDRDLVRIKGHRRHEVAAILGDAHFPEVVHRDNMLLDAVV.

Lys20 contacts ATP. 3 residues coordinate substrate: Ser59, Asp146, and Asn158. Residue 220–226 (TGGMYSK) coordinates ATP. Positions 285 to 363 (SGTVTVDEGA…HEVAAILGDA (79 aa)) constitute a PUA domain.

The protein belongs to the glutamate 5-kinase family.

It is found in the cytoplasm. It carries out the reaction L-glutamate + ATP = L-glutamyl 5-phosphate + ADP. The protein operates within amino-acid biosynthesis; L-proline biosynthesis; L-glutamate 5-semialdehyde from L-glutamate: step 1/2. Catalyzes the transfer of a phosphate group to glutamate to form L-glutamate 5-phosphate. This chain is Glutamate 5-kinase, found in Nitratidesulfovibrio vulgaris (strain ATCC 29579 / DSM 644 / CCUG 34227 / NCIMB 8303 / VKM B-1760 / Hildenborough) (Desulfovibrio vulgaris).